The sequence spans 439 residues: Putative phosphatidate cytidylyltransferase (439 aa).

The disordered stretch occupies residues 1 to 37 (MARKRTNKRNNSDKENGNVGVVQNKDSASSKTTEPAR). At serine 12 the chain carries Phosphoserine. A compositionally biased stretch (polar residues) spans 24–33 (NKDSASSKTT). 7 helical membrane-spanning segments follow: residues 52–71 (FITR…TALA), 76–98 (WVVL…IASV), 110–130 (FINW…SIYA), 145–165 (LVLH…VLFV), 180–199 (FCWT…FMIN), 245–265 (GFLG…YVLM), and 321–341 (FHLA…GFFA).

Belongs to the CDS family. The cofactor is Mg(2+).

It is found in the endoplasmic reticulum membrane. The catalysed reaction is a 1,2-diacyl-sn-glycero-3-phosphate + CTP + H(+) = a CDP-1,2-diacyl-sn-glycerol + diphosphate. It functions in the pathway phospholipid metabolism; CDP-diacylglycerol biosynthesis; CDP-diacylglycerol from sn-glycerol 3-phosphate: step 3/3. Its function is as follows. Supplies CDP-diacylglycerol, which may play an important role as both a precursor to phosphoinositide biosynthesis in the plasma membrane and as a negative effector of phosphatidylinositol 4-kinase activity, thereby exerting an effect on cell proliferation via a lipid-dependent signal transduction cascade. The sequence is that of Putative phosphatidate cytidylyltransferase from Schizosaccharomyces pombe (strain 972 / ATCC 24843) (Fission yeast).